A 351-amino-acid chain; its full sequence is UDP-3-O-acylglucosamine N-acyltransferase (351 aa).

The Proton acceptor role is filled by H240.

Belongs to the transferase hexapeptide repeat family. LpxD subfamily. Homotrimer.

The catalysed reaction is a UDP-3-O-[(3R)-3-hydroxyacyl]-alpha-D-glucosamine + a (3R)-hydroxyacyl-[ACP] = a UDP-2-N,3-O-bis[(3R)-3-hydroxyacyl]-alpha-D-glucosamine + holo-[ACP] + H(+). The protein operates within bacterial outer membrane biogenesis; LPS lipid A biosynthesis. Functionally, catalyzes the N-acylation of UDP-3-O-acylglucosamine using 3-hydroxyacyl-ACP as the acyl donor. Is involved in the biosynthesis of lipid A, a phosphorylated glycolipid that anchors the lipopolysaccharide to the outer membrane of the cell. This chain is UDP-3-O-acylglucosamine N-acyltransferase, found in Pseudomonas syringae pv. tomato (strain ATCC BAA-871 / DC3000).